Consider the following 426-residue polypeptide: 5-methylthioadenosine/S-adenosylhomocysteine deaminase (426 aa).

Positions 60 and 62 each coordinate Zn(2+). 2 residues coordinate substrate: Glu89 and His179. His206 contributes to the Zn(2+) binding site. Glu209 and Asp294 together coordinate substrate. Asp294 lines the Zn(2+) pocket.

Belongs to the metallo-dependent hydrolases superfamily. MTA/SAH deaminase family. Zn(2+) serves as cofactor.

It carries out the reaction S-adenosyl-L-homocysteine + H2O + H(+) = S-inosyl-L-homocysteine + NH4(+). It catalyses the reaction S-methyl-5'-thioadenosine + H2O + H(+) = S-methyl-5'-thioinosine + NH4(+). Catalyzes the deamination of 5-methylthioadenosine and S-adenosyl-L-homocysteine into 5-methylthioinosine and S-inosyl-L-homocysteine, respectively. Is also able to deaminate adenosine. The sequence is that of 5-methylthioadenosine/S-adenosylhomocysteine deaminase from Dictyoglomus thermophilum (strain ATCC 35947 / DSM 3960 / H-6-12).